A 540-amino-acid chain; its full sequence is Glucose-6-phosphate isomerase (540 aa).

E350 functions as the Proton donor in the catalytic mechanism. Residues H381 and K503 contribute to the active site.

The protein belongs to the GPI family.

Its subcellular location is the cytoplasm. It carries out the reaction alpha-D-glucose 6-phosphate = beta-D-fructose 6-phosphate. It functions in the pathway carbohydrate biosynthesis; gluconeogenesis. Its pathway is carbohydrate degradation; glycolysis; D-glyceraldehyde 3-phosphate and glycerone phosphate from D-glucose: step 2/4. In terms of biological role, catalyzes the reversible isomerization of glucose-6-phosphate to fructose-6-phosphate. In Burkholderia multivorans (strain ATCC 17616 / 249), this protein is Glucose-6-phosphate isomerase.